The sequence spans 70 residues: MKARELKELRSSNPQDLTLKLGDLKAELFNLRFQLATGQLENPMRIREVKKSIAQIKTILREDEMRALEQ.

The protein belongs to the universal ribosomal protein uL29 family.

The polypeptide is Large ribosomal subunit protein uL29 (Clostridium botulinum (strain Eklund 17B / Type B)).